A 445-amino-acid polypeptide reads, in one-letter code: MSTSAAPTPLESRASGPLSGTIRVPGDKSISHRALILGALSVGGTRISGLLEGEDVLNTAKSMRTLGAKVERTGEFAWTVNGVGVGGFAQPAATLDFGNSGTGCRLVMGAVAGCPISAVFDGDASLRSRPMRRILDPLALMGAKVTASAEGGKLPLTLQGASNPVPIEYRTPVASAQIKSAVLLAGLAAPGVTTVIEQEASRDHTELMLKHFGAEIVTTPEGSHGRRIALTGQPELRGAPVIVPADPSSAAFPLVAALIVDGSDLVLSDVMTNPLRTGLFTTLREMGASIEEDDVRGDAGEPMARLRVRASKLKGVEVPPERAPSMIDEYLVLAVAAAYAEGTTIMRGLHELRVKESDRLEATAAMLRVNGVKVEITGDDLIVEGRGHVPGGGLVATHMDHRIAMSALVMGLASDKPVTVDDTAFIATSFPDFIPLMRKAGADFA.

The segment at 1-20 is disordered; sequence MSTSAAPTPLESRASGPLSG. The 3-phosphoshikimate site is built by lysine 28, serine 29, and arginine 33. Lysine 28 is a phosphoenolpyruvate binding site. Residues glycine 101 and arginine 129 each coordinate phosphoenolpyruvate. 4 residues coordinate 3-phosphoshikimate: serine 175, glutamine 177, aspartate 328, and lysine 355. Glutamine 177 contributes to the phosphoenolpyruvate binding site. The active-site Proton acceptor is the aspartate 328. Phosphoenolpyruvate is bound by residues arginine 359 and arginine 402.

It belongs to the EPSP synthase family. Monomer.

The protein localises to the cytoplasm. The catalysed reaction is 3-phosphoshikimate + phosphoenolpyruvate = 5-O-(1-carboxyvinyl)-3-phosphoshikimate + phosphate. It functions in the pathway metabolic intermediate biosynthesis; chorismate biosynthesis; chorismate from D-erythrose 4-phosphate and phosphoenolpyruvate: step 6/7. Its function is as follows. Catalyzes the transfer of the enolpyruvyl moiety of phosphoenolpyruvate (PEP) to the 5-hydroxyl of shikimate-3-phosphate (S3P) to produce enolpyruvyl shikimate-3-phosphate and inorganic phosphate. In Bradyrhizobium sp. (strain ORS 278), this protein is 3-phosphoshikimate 1-carboxyvinyltransferase.